The primary structure comprises 455 residues: Ribosomal protein uS12 methylthiotransferase RimO (455 aa).

Residues 10 to 126 (RKVSMISLGC…ILELIEAHDR (117 aa)) form the MTTase N-terminal domain. Positions 19, 55, 89, 164, 168, and 171 each coordinate [4Fe-4S] cluster. The 231-residue stretch at 150 to 380 (SSPFYSTYVK…MKAQQRVSFR (231 aa)) folds into the Radical SAM core domain. The TRAM domain maps to 383–451 (RALIGRVEPV…EYDLIGEIVD (69 aa)).

It belongs to the methylthiotransferase family. RimO subfamily. It depends on [4Fe-4S] cluster as a cofactor.

The protein resides in the cytoplasm. The enzyme catalyses L-aspartate(89)-[ribosomal protein uS12]-hydrogen + (sulfur carrier)-SH + AH2 + 2 S-adenosyl-L-methionine = 3-methylsulfanyl-L-aspartate(89)-[ribosomal protein uS12]-hydrogen + (sulfur carrier)-H + 5'-deoxyadenosine + L-methionine + A + S-adenosyl-L-homocysteine + 2 H(+). In terms of biological role, catalyzes the methylthiolation of an aspartic acid residue of ribosomal protein uS12. The sequence is that of Ribosomal protein uS12 methylthiotransferase RimO from Syntrophotalea carbinolica (strain DSM 2380 / NBRC 103641 / GraBd1) (Pelobacter carbinolicus).